A 714-amino-acid chain; its full sequence is Palmitoyltransferase ZDHHC5 (714 aa).

The Cytoplasmic portion of the chain corresponds to 1-13; sequence MPAESAKRFKPSK. Residues 14–34 form a helical membrane-spanning segment; sequence YVPVSAAAIFLVGATTLFFAF. Residues 35-52 are Extracellular-facing; sequence TCPGLSLSVSPAVPVYNA. The helical transmembrane segment at 53-73 threads the bilayer; sequence VVFLFVLANFSMATFMDPGVF. The Cytoplasmic portion of the chain corresponds to 74–148; that stretch reads PRAEEDEDKE…NCIGRRNYRY (75 aa). Position 91 is a phosphotyrosine (tyrosine 91). A DHHC domain is found at 104 to 154; sequence KWCATCRFYRPPRCSHCSVCDNCVEEFDHHCPWVNNCIGRRNYRYFFLFLL. Cysteine 134 serves as the catalytic S-palmitoyl cysteine intermediate. Residues 149–169 form a helical membrane-spanning segment; sequence FFLFLLSLTAHITGVFGFGLL. The Extracellular segment spans residues 170-191; sequence YVLYHMEELSGVRTAVTMAVMC. The helical transmembrane segment at 192–212 threads the bilayer; it reads VAGLFFIPVAGLTGFHVVLVA. Residues 213-714 lie on the Cytoplasmic side of the membrane; the sequence is RGRTTNEQVT…VGGTTYEISV (502 aa). A Phosphoserine modification is found at serine 247. Residues 289–714 form a disordered region; it reads GELRRTKSKG…VGGTTYEISV (426 aa). Threonine 294 is modified (phosphothreonine). Phosphoserine is present on residues serine 296 and serine 299. Phosphothreonine is present on threonine 303. Serine 345 carries the phosphoserine modification. Threonine 348 and threonine 350 each carry phosphothreonine. A compositionally biased stretch (low complexity) spans 359-373; it reads SSSSASAAMPHSSSA. Phosphoserine is present on residues serine 380, serine 398, serine 406, and serine 409. Polar residues predominate over residues 388 to 398; it reads AESSRQPSYRS. Threonine 411 bears the Phosphothreonine mark. The segment covering 422-432 has biased composition (low complexity); that stretch reads SSGSRSSSLKS. Phosphoserine occurs at positions 425, 429, and 432. Threonine 436 is modified (phosphothreonine). Over residues 445–478 the composition is skewed to polar residues; sequence SIRSEGTTSTSYKSLANQTRNGSLSYDSLLTPSD. Residues serine 529 and serine 554 each carry the phosphoserine modification. Arginine 616 carries the omega-N-methylarginine modification. Serine 620 carries the post-translational modification Phosphoserine. A Phosphothreonine modification is found at threonine 658. Residues 667-678 are compositionally biased toward polar residues; the sequence is TAYSKSNGQPKS. Residues 683 to 692 are compositionally biased toward pro residues; it reads PPGPGQPPLS. Serine 693 bears the Phosphoserine mark. The residue at position 696 (arginine 696) is an Omega-N-methylarginine.

It belongs to the DHHC palmitoyltransferase family. ERF2/ZDHHC9 subfamily. Post-translationally, phosphorylation regulates association with endocytic proteins and its subcellular localization. Phosphorylation by LYN during fatty acid uptake leads to inactivation of the activity. Autopalmitoylated. Palmitoylation of the C-terminal tail regulates stimulation-dependent plasma membrane motility.

The protein resides in the cell membrane. It carries out the reaction L-cysteinyl-[protein] + hexadecanoyl-CoA = S-hexadecanoyl-L-cysteinyl-[protein] + CoA. Palmitoyltransferase that catalyzes the addition of palmitate onto various protein substrates such as CTNND2, CD36, GSDMD, NLRP3, NOD1, NOD2, STAT3 and S1PR1 thus plays a role in various biological processes including cell adhesion, inflammation, fatty acid uptake, bacterial sensing or cardiac functions. Plays an important role in the regulation of synapse efficacy by mediating palmitoylation of delta-catenin/CTNND2, thereby increasing synaptic delivery and surface stabilization of alpha-amino-3-hydroxy-5-methyl-4-isoxazole propionic acid receptors (AMPARs). Under basal conditions, remains at the synaptic membrane through FYN-mediated phosphorylation that prevents association with endocytic proteins. Neuronal activity enhances the internalization and trafficking of DHHC5 from spines to dendritic shafts where it palmitoylates delta-catenin/CTNND2. Regulates cell adhesion at the plasma membrane by palmitoylating GOLGA7B and DSG2. Plays a role in innate immune response by mediating the palmitoylation of NOD1 and NOD2 and their proper recruitment to the bacterial entry site and phagosomes. Also participates in fatty acid uptake by palmitoylating CD36 and thereby targeting it to the plasma membrane. Upon binding of fatty acids to CD36, gets phosphorylated by LYN leading to inactivation and subsequent CD36 caveolar endocytosis. Controls oligodendrocyte development by catalyzing STAT3 palmitoylation. Acts as a regulator of inflammatory response by mediating palmitoylation of NLRP3 and GSDMD. Palmitoylates NLRP3 to promote inflammasome assembly and activation. Activates pyroptosis by catalyzing palmitoylation of gasdermin-D (GSDMD), thereby promoting membrane translocation and pore formation of GSDMD. In Bos taurus (Bovine), this protein is Palmitoyltransferase ZDHHC5 (ZDHHC5).